A 71-amino-acid chain; its full sequence is MGRVKPKYIKSLAEKLLETYPDRFTDSFEENKKAVAELAEIPSKTVRNKVAGYITRLIKRRKAQEKAETAA.

The protein belongs to the eukaryotic ribosomal protein eS17 family.

This chain is Small ribosomal subunit protein eS17, found in Pyrobaculum arsenaticum (strain DSM 13514 / JCM 11321 / PZ6).